The chain runs to 399 residues: Putative endoplasmin-like protein (399 aa).

A Glycyl lysine isopeptide (Lys-Gly) (interchain with G-Cter in SUMO2) cross-link involves residue Lys-130. The disordered stretch occupies residues 350-399; the sequence is LDLAVVEEPDEEPEETAEDKEQDKDKEMDVGTDEEKQETAKESTAEKDEL. A compositionally biased stretch (acidic residues) spans 354–367; sequence VVEEPDEEPEETAE. The span at 368-399 shows a compositional bias: basic and acidic residues; the sequence is DKEQDKDKEMDVGTDEEKQETAKESTAEKDEL.

It belongs to the heat shock protein 90 family.

In terms of biological role, putative molecular chaperone. In Homo sapiens (Human), this protein is Putative endoplasmin-like protein (HSP90B2P).